A 330-amino-acid chain; its full sequence is 2-oxoisovalerate dehydrogenase subunit alpha (330 aa).

Residues F44, Y73, 107 to 110 (MPGH), and S123 contribute to the substrate site. Position 72-74 (72-74 (YYR)) interacts with thiamine diphosphate. Residues 123–125 (SPV), 153–159 (GEGSSNQ), 183–187 (NKYAI), and H252 contribute to the thiamine diphosphate site. 3 residues coordinate Mg(2+): E154, N183, and Y185. Residues 249 to 272 (LTPHSSDDDDSSYRGREEVEEAKK) form a disordered region. Residues 259–272 (SSYRGREEVEEAKK) are compositionally biased toward basic and acidic residues.

It belongs to the BCKDHA family. As to quaternary structure, heterotetramer of two alpha and two beta chains. Directly associated with ODBB in the E1 complex. The cofactor is thiamine diphosphate.

It carries out the reaction N(6)-[(R)-lipoyl]-L-lysyl-[protein] + 3-methyl-2-oxobutanoate + H(+) = N(6)-[(R)-S(8)-2-methylpropanoyldihydrolipoyl]-L-lysyl-[protein] + CO2. Its function is as follows. The branched-chain alpha-keto dehydrogenase complex catalyzes the overall conversion of alpha-keto acids to acyl-CoA and CO(2). It contains multiple copies of three enzymatic components: branched-chain alpha-keto acid decarboxylase (E1), lipoamide acyltransferase (E2) and lipoamide dehydrogenase (E3). The polypeptide is 2-oxoisovalerate dehydrogenase subunit alpha (bfmBAA) (Bacillus subtilis (strain 168)).